The primary structure comprises 335 residues: Putative T-box protein 7 (335 aa).

The T-box DNA-binding region spans 73–246 (LWSTFLECGT…NNPFAKGFRN (174 aa)).

Its subcellular location is the nucleus. The chain is Putative T-box protein 7 from Caenorhabditis elegans.